A 515-amino-acid chain; its full sequence is 2,3-bisphosphoglycerate-independent phosphoglycerate mutase 1 (515 aa).

Mn(2+)-binding residues include Asp-14 and Ser-64. Ser-64 (phosphoserine intermediate) is an active-site residue. Substrate-binding positions include His-125, 155-156, Arg-187, Arg-193, 264-267, and Lys-337; these read RD and RADR. Mn(2+)-binding residues include Asp-404, His-408, Asp-445, His-446, and His-464.

The protein belongs to the BPG-independent phosphoglycerate mutase family. Requires Mn(2+) as cofactor.

The enzyme catalyses (2R)-2-phosphoglycerate = (2R)-3-phosphoglycerate. It functions in the pathway carbohydrate degradation; glycolysis; pyruvate from D-glyceraldehyde 3-phosphate: step 3/5. Functionally, catalyzes the interconversion of 2-phosphoglycerate and 3-phosphoglycerate. The polypeptide is 2,3-bisphosphoglycerate-independent phosphoglycerate mutase 1 (Methanosarcina acetivorans (strain ATCC 35395 / DSM 2834 / JCM 12185 / C2A)).